A 454-amino-acid chain; its full sequence is Exopolyphosphatase PRUNE1 (454 aa).

An N-acetylmethionine modification is found at methionine 1. Positions 28, 30, 106, and 179 each coordinate Mn(2+). The DHH motif signature appears at 106–108 (DHH). The essential for homodimerization stretch occupies residues 394-421 (SLISGLSQDEEDPPLPPTPMNSLVDECP). The disordered stretch occupies residues 397–420 (SGLSQDEEDPPLPPTPMNSLVDEC). A Phosphoserine modification is found at serine 400. Threonine 411 is subject to Phosphothreonine. The residue at position 415 (serine 415) is a Phosphoserine.

It belongs to the PPase class C family. Prune subfamily. Homooligomer. Able to homodimerize via its C-terminal domain. Interacts with NME1. Interacts with GSK3; at focal adhesion complexes where paxillin and vinculin are colocalized. Interacts with alpha and beta tubulin. Requires Mn(2+) as cofactor.

It localises to the cytoplasm. The protein localises to the nucleus. The protein resides in the cell junction. It is found in the focal adhesion. It carries out the reaction diphosphate + H2O = 2 phosphate + H(+). Its activity is regulated as follows. Activated by magnesium ions and inhibited by manganese ions. Inhibited by dipyridamole, moderately sensitive to IBMX and inhibited by vinpocetine. In terms of biological role, phosphodiesterase (PDE) that has higher activity toward cAMP than cGMP, as substrate. Plays a role in cell proliferation, migration and differentiation, and acts as a negative regulator of NME1. Plays a role in the regulation of neurogenesis. Involved in the regulation of microtubule polymerization. This is Exopolyphosphatase PRUNE1 (Prune1) from Mus musculus (Mouse).